The following is an 856-amino-acid chain: Lon protease (856 aa).

The region spanning F68 to I261 is the Lon N-terminal domain. G412–T419 is a binding site for ATP. Positions E647–R828 constitute a Lon proteolytic domain. Residues S734 and K777 contribute to the active site.

It belongs to the peptidase S16 family. In terms of assembly, homohexamer. Organized in a ring with a central cavity.

It localises to the cytoplasm. The catalysed reaction is Hydrolysis of proteins in presence of ATP.. Its function is as follows. ATP-dependent serine protease that mediates the selective degradation of mutant and abnormal proteins as well as certain short-lived regulatory proteins. Required for cellular homeostasis and for survival from DNA damage and developmental changes induced by stress. Degrades polypeptides processively to yield small peptide fragments that are 5 to 10 amino acids long. Binds to DNA in a double-stranded, site-specific manner. This is Lon protease from Azorhizobium caulinodans (strain ATCC 43989 / DSM 5975 / JCM 20966 / LMG 6465 / NBRC 14845 / NCIMB 13405 / ORS 571).